The following is a 145-amino-acid chain: Acidic phospholipase A2 S1-11 (145 aa).

The N-terminal stretch at 1 to 19 is a signal peptide; sequence MYPAHLLVLLAVCVSLLGA. A propeptide spanning residues 20-27 is cleaved from the precursor; sequence SDMPPQPL. Disulfide bonds link cysteine 38-cysteine 99, cysteine 54-cysteine 144, cysteine 56-cysteine 72, cysteine 71-cysteine 127, and cysteine 106-cysteine 118. Residues tyrosine 55, glycine 57, and glycine 59 each contribute to the Ca(2+) site. The active site involves histidine 75. Aspartate 76 provides a ligand contact to Ca(2+). Aspartate 121 is an active-site residue.

It belongs to the phospholipase A2 family. Group I subfamily. D49 sub-subfamily. It depends on Ca(2+) as a cofactor. In terms of processing, this enzyme lacks two of the seven disulfide bonds found in similar PLA2 proteins. In terms of tissue distribution, expressed by the venom gland.

Its subcellular location is the secreted. It catalyses the reaction a 1,2-diacyl-sn-glycero-3-phosphocholine + H2O = a 1-acyl-sn-glycero-3-phosphocholine + a fatty acid + H(+). Snake venom phospholipase A2 (PLA2) that inhibits collagen-induced platelet aggregation. PLA2 catalyzes the calcium-dependent hydrolysis of the 2-acyl groups in 3-sn-phosphoglycerides. In Austrelaps superbus (Lowland copperhead snake), this protein is Acidic phospholipase A2 S1-11.